The following is a 619-amino-acid chain: Coagulation factor X-activating enzyme heavy chain (619 aa).

Positions 1-20 (MMQVLLVTISLAVFPYQGSS) are cleaved as a signal peptide. Residues 21–188 (IILESGNVND…SDKPIKKASQ (168 aa)) constitute a propeptide that is removed on maturation. One can recognise a Peptidase M12B domain in the interval 199–393 (IFIELVIIVD…YKPKCIFNPP (195 aa)). A disulfide bond links Cys215 and Cys251. Residues Asn216 and Asn257 are each glycosylated (N-linked (GlcNAc...) (complex) asparagine). Intrachain disulfides connect Cys308/Cys388, Cys348/Cys372, and Cys350/Cys355. His333 serves as a coordination point for Zn(2+). The active site involves Glu334. Zn(2+) is bound by residues His337 and His343. N-linked (GlcNAc...) (complex) asparagine glycans are attached at residues Asn351 and Asn371. A Disintegrin domain is found at 401–487 (PPVCGNEIWE…ECPRDQLQQN (87 aa)). Residues Val403, Asn406, Ile408, Glu410, Glu413, and Asp416 each contribute to the Ca(2+) site. 14 disulfides stabilise this stretch: Cys404/Cys433, Cys415/Cys428, Cys417/Cys423, Cys427/Cys450, Cys441/Cys447, Cys446/Cys472, Cys459/Cys479, Cys466/Cys498, Cys491/Cys503, Cys510/Cys560, Cys525/Cys571, Cys538/Cys548, Cys555/Cys597, and Cys591/Cys603. Positions 465–467 (ECD) match the D/ECD-tripeptide motif. 5 residues coordinate Ca(2+): Asp467, Val468, Glu470, Asp482, and Gln483.

This sequence belongs to the venom metalloproteinase (M12B) family. P-III subfamily. P-IIId sub-subfamily. In terms of assembly, heterotrimer; disulfide-linked. The heterotrimer consists of 1 heavy chain and 2 light chains (lectins): LC1 and LC2. The cofactor is Zn(2+). Post-translationally, N-glycosylated; probably required for conformation. Removal of easily accessible sugars does not change its functional capacity, but removal of the core sugars with N-glycanase causes a virtually complete loss of enzyme activity, apparently as a result of major conformational changes in the molecule. Not O-glycosylated. Expressed by the venom gland.

It is found in the secreted. The enzyme catalyses Specifically activates several components of the blood clotting system, including coagulation factor X, coagulation factor IX and protein C by cleavage of Arg-|-Xaa bonds. Has no action on insulin B chain.. Its function is as follows. Catalytic subunit of blood coagulation factor X-activating enzyme. Activates coagulation factor X (F10) by cleaving the Arg-Ile bond and is also able to activate coagulation factor IX (F9) and protein S (PROS1) by specific cleavage of Arg-Ile and Arg-Val bonds. The sequence is that of Coagulation factor X-activating enzyme heavy chain from Daboia siamensis (Eastern Russel's viper).